Here is an 87-residue protein sequence, read N- to C-terminus: Small ribosomal subunit protein uS17 (87 aa).

This sequence belongs to the universal ribosomal protein uS17 family. As to quaternary structure, part of the 30S ribosomal subunit.

In terms of biological role, one of the primary rRNA binding proteins, it binds specifically to the 5'-end of 16S ribosomal RNA. This chain is Small ribosomal subunit protein uS17, found in Endomicrobium trichonymphae.